A 247-amino-acid polypeptide reads, in one-letter code: 23S rRNA (guanosine-2'-O-)-methyltransferase RlmB (247 aa).

Residues Gly-197, Ile-217, and Leu-226 each contribute to the S-adenosyl-L-methionine site.

Belongs to the class IV-like SAM-binding methyltransferase superfamily. RNA methyltransferase TrmH family. RlmB subfamily.

It is found in the cytoplasm. It carries out the reaction guanosine(2251) in 23S rRNA + S-adenosyl-L-methionine = 2'-O-methylguanosine(2251) in 23S rRNA + S-adenosyl-L-homocysteine + H(+). Its function is as follows. Specifically methylates the ribose of guanosine 2251 in 23S rRNA. The sequence is that of 23S rRNA (guanosine-2'-O-)-methyltransferase RlmB from Vibrio parahaemolyticus serotype O3:K6 (strain RIMD 2210633).